Reading from the N-terminus, the 1187-residue chain is Probable histidine kinase 5 (1187 aa).

Over 1-175 (MSRVGECGGG…QNNALSFNHG (175 aa)) the chain is Extracellular. Residues 176–196 (MIFSLSASLGIVVILVVITIF) form a helical membrane-spanning segment. Over 197–226 (KRGKQANELCQHEKLLQTPSVKISRKWSKR) the chain is Cytoplasmic. Residues 227–247 (ALLLGVLVGLCSSVWIFSSMH) traverse the membrane as a helical segment. Residues 248-531 (ADVVARRIEN…FKHAPSLPWS (284 aa)) are Extracellular-facing. Residues 295–519 (NPSAIDQKTF…GDPTRKHVMH (225 aa)) form the CHASE domain. Residues 532 to 552 (AIMISSAVAIIVLLVGYIIYA) form a helical membrane-spanning segment. The Cytoplasmic portion of the chain corresponds to 553 to 1187 (TLNSLEEAED…LEADATDPLT (635 aa)). The Histidine kinase domain maps to 587-862 (TVSHEIRTPM…TFSFTAIFKE (276 aa)). Phosphohistidine; by autocatalysis is present on histidine 590. Response regulatory domains lie at 886–1017 (RALV…SKAL) and 1041–1178 (NILV…AHFL). 2 positions are modified to 4-aspartylphosphate: aspartate 942 and aspartate 1091.

Activation probably requires a transfer of a phosphate group between a His in the transmitter domain and an Asp of the receiver domain. In terms of tissue distribution, highly expressed in young leaves and at lower levels in roots, mature leaves, stems and spikelets.

The protein localises to the cell membrane. The catalysed reaction is ATP + protein L-histidine = ADP + protein N-phospho-L-histidine.. Functionally, cytokinin receptor related to bacterial two-component regulators. Functions as a histidine kinase and transmits the stress signal to a downstream MAPK cascade. This is Probable histidine kinase 5 from Oryza sativa subsp. japonica (Rice).